Consider the following 444-residue polypeptide: Orexin receptor type 2 (444 aa).

Positions 1-10 are enriched in basic and acidic residues; the sequence is MSGTKLEDSP. The segment at 1–20 is disordered; the sequence is MSGTKLEDSPPCRNWSSASE. Over 1-54 the chain is Extracellular; the sequence is MSGTKLEDSPPCRNWSSASELNETQEPFLNPTDYDDEEFLRYLWREYLHPKEYE. N-linked (GlcNAc...) asparagine glycans are attached at residues N14 and N22. Residues 33–49 are required for response to orexin-A; sequence DYDDEEFLRYLWREYLH. The chain crosses the membrane as a helical span at residues 55-75; it reads WVLIAGYIIVFVVALIGNVLV. Residues 76 to 88 lie on the Cytoplasmic side of the membrane; it reads CVAVWKNHHMRTV. A helical transmembrane segment spans residues 89 to 110; the sequence is TNYFIVNLSLADVLVTITCLPA. Residues 111 to 127 lie on the Extracellular side of the membrane; sequence TLVVDITETWFFGQSLC. C127 and C210 are oxidised to a cystine. Residues 128–150 form a helical membrane-spanning segment; it reads KVIPYLQTVSVSVSVLTLSCIAL. Residues 151–170 are Cytoplasmic-facing; it reads DRWYAICHPLMFKSTAKRAR. Residues 171–191 form a helical membrane-spanning segment; sequence NSIVIIWIVSCIIMIPQAIVM. The Extracellular segment spans residues 192-222; sequence ECSTVFPGLANKTTLFTVCDERWGGEIYPKM. Residue N202 is glycosylated (N-linked (GlcNAc...) asparagine). A helical membrane pass occupies residues 223-243; it reads YHICFFLVTYMAPLCLMVLAY. The Cytoplasmic portion of the chain corresponds to 244–304; that stretch reads LQIFRKLWCR…QIRARRKTAR (61 aa). A helical transmembrane segment spans residues 305–326; sequence MLMIVLLVFAICYLPISILNVL. Residue N324 coordinates suvorexant. Residues 327–342 lie on the Extracellular side of the membrane; that stretch reads KRVFGMFAHTEDRETV. A helical transmembrane segment spans residues 343–366; that stretch reads YAWFTFSHWLVYANSAANPIIYNF. At 367 to 444 the chain is on the cytoplasmic side; that stretch reads LSGKFREEFK…ANGAGPLQNW (78 aa).

It belongs to the G-protein coupled receptor 1 family.

The protein resides in the cell membrane. Nonselective, high-affinity receptor for both orexin-A and orexin-B neuropeptides. Triggers an increase in cytoplasmic Ca(2+) levels in response to orexin-A binding. This chain is Orexin receptor type 2 (HCRTR2), found in Homo sapiens (Human).